Consider the following 226-residue polypeptide: Large ribosomal subunit protein uL3 (226 aa).

Belongs to the universal ribosomal protein uL3 family. In terms of assembly, part of the 50S ribosomal subunit. Forms a cluster with proteins L14 and L19.

In terms of biological role, one of the primary rRNA binding proteins, it binds directly near the 3'-end of the 23S rRNA, where it nucleates assembly of the 50S subunit. This Sulfurihydrogenibium sp. (strain YO3AOP1) protein is Large ribosomal subunit protein uL3.